The sequence spans 874 residues: Alanine--tRNA ligase (874 aa).

The Zn(2+) site is built by histidine 564, histidine 568, cysteine 665, and histidine 669.

The protein belongs to the class-II aminoacyl-tRNA synthetase family. It depends on Zn(2+) as a cofactor.

The protein resides in the cytoplasm. It carries out the reaction tRNA(Ala) + L-alanine + ATP = L-alanyl-tRNA(Ala) + AMP + diphosphate. Catalyzes the attachment of alanine to tRNA(Ala) in a two-step reaction: alanine is first activated by ATP to form Ala-AMP and then transferred to the acceptor end of tRNA(Ala). Also edits incorrectly charged Ser-tRNA(Ala) and Gly-tRNA(Ala) via its editing domain. The polypeptide is Alanine--tRNA ligase (Burkholderia pseudomallei (strain 1106a)).